The primary structure comprises 299 residues: Probable 4-deoxy-4-formamido-L-arabinose-phosphoundecaprenol deformylase ArnD (299 aa).

In terms of domain architecture, NodB homology spans 2–263; the sequence is IDVGLRIDVD…EASARGIRFV (262 aa).

The protein belongs to the polysaccharide deacetylase family. ArnD deformylase subfamily.

The catalysed reaction is 4-deoxy-4-formamido-alpha-L-arabinopyranosyl di-trans,octa-cis-undecaprenyl phosphate + H2O = 4-amino-4-deoxy-alpha-L-arabinopyranosyl di-trans,octa-cis-undecaprenyl phosphate + formate. Its pathway is glycolipid biosynthesis; 4-amino-4-deoxy-alpha-L-arabinose undecaprenyl phosphate biosynthesis; 4-amino-4-deoxy-alpha-L-arabinose undecaprenyl phosphate from UDP-4-deoxy-4-formamido-beta-L-arabinose and undecaprenyl phosphate: step 2/2. It participates in bacterial outer membrane biogenesis; lipopolysaccharide biosynthesis. In terms of biological role, catalyzes the deformylation of 4-deoxy-4-formamido-L-arabinose-phosphoundecaprenol to 4-amino-4-deoxy-L-arabinose-phosphoundecaprenol. The modified arabinose is attached to lipid A and is required for resistance to polymyxin and cationic antimicrobial peptides. The sequence is that of Probable 4-deoxy-4-formamido-L-arabinose-phosphoundecaprenol deformylase ArnD from Aeromonas salmonicida (strain A449).